The sequence spans 3365 residues: Probable serine/threonine-protein kinase roco9 (3365 aa).

Disordered stretches follow at residues 1-177, 397-497, 944-985, 1044-1098, and 1261-1301; these read MTSI…KSSK, ESTE…QPPQ, PIKK…GFLS, IHQQ…NNKI, and QNNL…ISKG. The segment covering 8–27 has biased composition (basic and acidic residues); that stretch reads FDKKSKRSNEDTGEKEETKK. 4 stretches are compositionally biased toward low complexity: residues 51–84, 100–116, 137–169, and 397–415; these read LQQL…SLNT, STNS…STRS, SQTS…TVKT, and ESTE…TLEP. Residues 243 to 437 enclose the Rho-GAP domain; that stretch reads TPLYSLIKRQ…RLPQQSSDDN (195 aa). A compositionally biased stretch (polar residues) spans 421-434; that stretch reads PLSTSTQRLPQQSS. Composition is skewed to low complexity over residues 435–445, 457–489, 959–974, 1044–1096, and 1262–1301; these read DDNSNNDNNNK, NNDN…QPKQ, SSPL…IPSK, IHQQ…NNNN, and NNLN…ISKG. Positions 804 to 1484 constitute a Myotubularin phosphatase domain; it reads IWDIYSPLIE…DQIILWSSFF (681 aa). 16 LRR repeats span residues 1510–1526, 1527–1549, 1550–1572, 1576–1599, 1600–1622, 1624–1645, 1646–1668, 1670–1691, 1697–1720, 1722–1743, 1744–1770, 1772–1789, 1790–1812, 1814–1835, 1837–1861, and 1863–1887; these read SQKL…LSYF, STLT…IILL, SNLT…LLKL, KLKL…IYTL, STLT…ISKM, QLKC…LSLC, VGLE…FFKL, SLRM…KLDD, MNEI…MFEM, SLIH…LLDN, LVNL…LFKL, VLDL…HAML, PSLK…DFNL, LLSE…IGTK, LSLT…ALLK, and LKSL…DAIL. Basic and acidic residues predominate over residues 1932–1947; the sequence is SKEREKEKEKEKEKEK. Disordered stretches follow at residues 1932 to 1963, 2190 to 2389, 2507 to 2567, and 2674 to 2704; these read SKER…DKDK, NNNN…NNGS, APST…LQTP, and SNQQ…TSIN. Low complexity-rich tracts occupy residues 2190-2205, 2216-2389, 2522-2567, and 2676-2688; these read NNNN…NNNN, SINN…NNGS, NNTS…LQTP, and QQQQ…STQH. The 262-residue stretch at 3008-3269 folds into the Protein kinase domain; that stretch reads ELDPNPIGEG…KKLEEIELIL (262 aa). Residues 3014 to 3022 and Lys-3035 contribute to the ATP site; that span reads IGEGGTATV. The active-site Proton acceptor is Asp-3132. Low complexity predominate over residues 3311-3333; sequence QQQKQQQLQQQKQSPKQLQQQKP. The segment at 3311 to 3365 is disordered; that stretch reads QQQKQQQLQQQKQSPKQLQQQKPLPTPPKQLSNNDSTPTKPLDDSSDSSSEDSNN. The segment covering 3354–3365 has biased composition (acidic residues); that stretch reads DSSDSSSEDSNN.

It belongs to the protein kinase superfamily. TKL Ser/Thr protein kinase family. ROCO subfamily.

It catalyses the reaction L-seryl-[protein] + ATP = O-phospho-L-seryl-[protein] + ADP + H(+). The catalysed reaction is L-threonyl-[protein] + ATP = O-phospho-L-threonyl-[protein] + ADP + H(+). This is Probable serine/threonine-protein kinase roco9 (roco9) from Dictyostelium discoideum (Social amoeba).